The chain runs to 115 residues: T cell receptor beta variable 11-3 (115 aa).

Residues Met1–Ala21 form the signal peptide. Residues Gly22–Leu115 form the Ig-like domain. Cysteines 42 and 111 form a disulfide.

As to quaternary structure, alpha-beta TR is a heterodimer composed of an alpha and beta chain; disulfide-linked. The alpha-beta TR is associated with the transmembrane signaling CD3 coreceptor proteins to form the TR-CD3 (TcR or TCR). The assembly of alpha-beta TR heterodimers with CD3 occurs in the endoplasmic reticulum where a single alpha-beta TR heterodimer associates with one CD3D-CD3E heterodimer, one CD3G-CD3E heterodimer and one CD247 homodimer forming a stable octameric structure. CD3D-CD3E and CD3G-CD3E heterodimers preferentially associate with TR alpha and TR beta chains, respectively. The association of the CD247 homodimer is the last step of TcR assembly in the endoplasmic reticulum and is required for transport to the cell surface.

It localises to the cell membrane. In terms of biological role, v region of the variable domain of T cell receptor (TR) beta chain that participates in the antigen recognition. Alpha-beta T cell receptors are antigen specific receptors which are essential to the immune response and are present on the cell surface of T lymphocytes. Recognize peptide-major histocompatibility (MH) (pMH) complexes that are displayed by antigen presenting cells (APC), a prerequisite for efficient T cell adaptive immunity against pathogens. Binding of alpha-beta TR to pMH complex initiates TR-CD3 clustering on the cell surface and intracellular activation of LCK that phosphorylates the ITAM motifs of CD3G, CD3D, CD3E and CD247 enabling the recruitment of ZAP70. In turn ZAP70 phosphorylates LAT, which recruits numerous signaling molecules to form the LAT signalosome. The LAT signalosome propagates signal branching to three major signaling pathways, the calcium, the mitogen-activated protein kinase (MAPK) kinase and the nuclear factor NF-kappa-B (NF-kB) pathways, leading to the mobilization of transcription factors that are critical for gene expression and essential for T cell growth and differentiation. The T cell repertoire is generated in the thymus, by V-(D)-J rearrangement. This repertoire is then shaped by intrathymic selection events to generate a peripheral T cell pool of self-MH restricted, non-autoaggressive T cells. Post-thymic interaction of alpha-beta TR with the pMH complexes shapes TR structural and functional avidity. This is T cell receptor beta variable 11-3 from Homo sapiens (Human).